A 381-amino-acid polypeptide reads, in one-letter code: Creatine kinase M-type (381 aa).

In terms of domain architecture, Phosphagen kinase N-terminal spans 11 to 98 (KLNYSAAEEF…FDPVIEDRHG (88 aa)). Positions 125-367 (YVLSSRVRTG…KLMVEMEKRL (243 aa)) constitute a Phosphagen kinase C-terminal domain. Residues 128 to 132 (SSRVR), H191, R236, R292, 320 to 325 (RGTGGV), and D335 contribute to the ATP site.

Belongs to the ATP:guanido phosphotransferase family. As to quaternary structure, dimer of identical or non-identical chains. With MM being the major form in skeletal muscle and myocardium, MB existing in myocardium, and BB existing in many tissues, especially brain.

It is found in the cytoplasm. It catalyses the reaction creatine + ATP = N-phosphocreatine + ADP + H(+). In terms of biological role, reversibly catalyzes the transfer of phosphate between ATP and various phosphogens (e.g. creatine phosphate). Creatine kinase isoenzymes play a central role in energy transduction in tissues with large, fluctuating energy demands, such as skeletal muscle, heart, brain and spermatozoa. The protein is Creatine kinase M-type of Torpedo marmorata (Marbled electric ray).